The primary structure comprises 1447 residues: MHDAESTVDSLLKEIDNEMEQTKSNITQNGSEDTPHNWKLPLQEIGDDTMEMLVKHNTRSNATENSRGRSPSKMSTISNESLNLGLLRVNSELEESPAAVHQERIKNSVANGALGHANSPKVLNNLKNMAQDIDKLARDEEKPVKLSSSPLKFTLKSTQPLLSYPESPIHRSSIEIETNYDDEDEEEEDAYTCLTQSPQILHSPSRIPITNAVSINKLNLDFTLNPNESDKSLVSDTSVDSTGRELDTKTIPELPFCMSSTPEMTPVDEKCNLPSKLLNTSNNSHSDSRSPTASVEDLNISTNLPGADSSQNNPVTTDADALIENDVVRDLQQNMEHIDDAFDEKKVLDEGCSNEPVTFLGENDTRSIVYSNKGTNANVQEFSQEDSLAHSEPKFKDLNATSDDVWNEDKETDANISTSTKSEESYIADYKVTRQEDWDTKKLHQESEHANEQPAIIPQKDSSEETFTELNNESEFQRNFKDGEEYRIVQHEESLYGQRTKSPEENIINGSEIGVDHGEAAEVNEPLAKTSAEEHDLSSSCEDQSVSEARNKDRIEEKEVETKDENIETEKDESEYHKVEENEEPEHVPLLPPLPRWEEIQFNEPFIDENDTSNDSIDLTRSMKPSDYISIWHIQEEEIKSNSPESIANSQFSQQSSITTASTVDSKKDNGSTSFKFKPRIVSRSRIYNPKSRVSSLNYYDNEDYILSNSEWNALDPMRRNTLISKRIQDNIRTQKGHAPLIRPSIMKLNGEDSGFQNHFLEVEQPQEHENIPLSTHLSEQDITTNVGLDEQKLPTNTQDEAEISIREIESAGDITFNRGDLLSLSFDEELGQDFANFLDALDHDSTSFNHGPDDSSSFQRDSSKKSFNSLWESSYELKPPPSIRKQPIAPDVLQKLLESDTKDDADLEKIREERITEPRTGLGIGMLKTPVKDVSIALAASIKGYEASFSDTDSRPEGMNNSDAITLNMFDDFEEDKMTPSTPVRSISPIKRHVSSPFKVVKAGNKQENNEINIKAEEEIEPMTQQETDGLKQDIPPLLAQTKDNVEAKEETITQLEEPQDVEQEFPDMGTLYLSIKAISTLALYGTKSHRATYAIVFDNGENVVQTPWESLPYDGNIRINKEFELPIDFKGKAETSSASSERDSYKKCVITLKCKYEKPRHELVEIVDKVPVGKSFFGKTKYKFEKKYVQKKPKQDEWDYLFAQDGSFARCEIEINEEFLKNVAFNTSHMHYNMINKWSRIADKIHGSKRLYELPRKAPHKVASLDVEACFLERTSAFEQFPKQFSLVNKIVSKYKLQQNIYKEGYLLQDGGDLKGKIENRFFKLHGSQLSGYHEISRKAKIDINLLKVTKVLRNEDIQADNGGQRNFTDWVLFNECFQLVFDDGERITFNAECSNEEKSDWYNKLQEVVELNVFHQPWVKKYCEKLAEEEKTRTTGHNLKQDFN.

The segment covering 1–16 (MHDAESTVDSLLKEID) has biased composition (basic and acidic residues). 2 disordered regions span residues 1-38 (MHDA…PHNW) and 57-76 (NTRS…KMST). Ser-10 is modified (phosphoserine). Composition is skewed to polar residues over residues 22–32 (TKSNITQNGSE) and 59–76 (RSNA…KMST). Ser-78, Ser-81, Ser-91, Ser-96, and Ser-167 each carry phosphoserine. A disordered region spans residues 272-316 (NLPSKLLNTSNNSHSDSRSPTASVEDLNISTNLPGADSSQNNPVT). The segment covering 277–316 (LLNTSNNSHSDSRSPTASVEDLNISTNLPGADSSQNNPVT) has biased composition (polar residues). Thr-365 is modified (phosphothreonine). Position 367 is a phosphoserine (Ser-367). A disordered region spans residues 444–479 (HQESEHANEQPAIIPQKDSSEETFTELNNESEFQRN). Position 511 is a phosphoserine (Ser-511). The interval 529 to 591 (KTSAEEHDLS…NEEPEHVPLL (63 aa)) is disordered. Residues 538–548 (SSSCEDQSVSE) show a composition bias toward polar residues. Residues 549-580 (ARNKDRIEEKEVETKDENIETEKDESEYHKVE) show a composition bias toward basic and acidic residues. At Ser-616 the chain carries Phosphoserine. Residues 648–664 (ANSQFSQQSSITTASTV) show a composition bias toward polar residues. The tract at residues 648-673 (ANSQFSQQSSITTASTVDSKKDNGST) is disordered. The tract at residues 768-879 (EHENIPLSTH…SLWESSYELK (112 aa)) is interaction with IQG1. 2 positions are modified to phosphoserine: Ser-805 and Ser-811. Residues 1302–1413 (NIYKEGYLLQ…WYNKLQEVVE (112 aa)) enclose the PH domain.

In terms of assembly, interacts with AXL1, AXL2, IQG1 and SEC3. Phosphorylated by CDC28.

It is found in the bud neck. Its function is as follows. Required for establishment of the axial budding pattern in haploid cells. Cooperates with other bud site selection proteins to recognize a spatial landmark during mitosis and they subsequently become a landmark for downstream polarity establishment factors that coordinate axial budding and cytokinesis. Involved in the septin organization at the bud neck. This Saccharomyces cerevisiae (strain ATCC 204508 / S288c) (Baker's yeast) protein is Bud site selection protein 4 (BUD4).